Reading from the N-terminus, the 475-residue chain is Luvungin A synthase CYP716AC1 (475 aa).

A helical membrane pass occupies residues 3–23 (FIILSLLLLSLALYSLYYVII). Cys423 serves as a coordination point for heme.

The protein belongs to the cytochrome P450 family. It depends on heme as a cofactor. As to expression, expressed in flowers, maturing fruits and in juice vesicles.

Its subcellular location is the membrane. The enzyme catalyses (21S)-21-acetoxyl-apo-melianone + reduced [NADPH--hemoprotein reductase] + O2 = luvungin A + oxidized [NADPH--hemoprotein reductase] + H2O + H(+). Its pathway is secondary metabolite biosynthesis; terpenoid biosynthesis. Functionally, monooxygenase involved in the biosynthesis of limonoids triterpene natural products such as limonin, a compound with insecticidal activity responsible for the bitter taste in citrus. Catalyzes the conversion of (21S)-21-acetoxyl-apo-melianone to luvungin A. In Citrus sinensis (Sweet orange), this protein is Luvungin A synthase CYP716AC1.